We begin with the raw amino-acid sequence, 351 residues long: MPTKIAVLGAGSWGTVLANLLTENGHEVDLWSHNPDQVALMKRTHQNEHYLGAEFTLQPALHVTADLGQALDQAAVILFVVPTNAIRSVAEQVKPILQAHKGRGEQPIIVHAAKGLERGSELRISQVLAEVLPKELIQGIVVISGPSHAEDVATHDITTLTAASDDLKLAEKVQKLFMNDYFRLYTNTDVIGVEIGAALKNVIAIGAGALHGLGYGDNTKAALMTRGLAEISRVGVKLGAEPLTFIGLSGVGDLIVTCTSVHSRNWRAGNALGQGEKLPDVLKNMGMVVEGVSTTKVAHQMARELDVDMPITDAIYQVLYENAPIRTVITDLMKRSGKPEFDFDNASLQKP.

The NADPH site is built by Ser-12, Trp-13, His-33, and Lys-114. Positions 114, 145, and 147 each coordinate sn-glycerol 3-phosphate. An NADPH-binding site is contributed by Ala-149. Residues Lys-200, Asp-253, Ser-263, Arg-264, and Asn-265 each coordinate sn-glycerol 3-phosphate. Lys-200 acts as the Proton acceptor in catalysis. Residue Arg-264 coordinates NADPH. NADPH contacts are provided by Val-288 and Glu-290.

It belongs to the NAD-dependent glycerol-3-phosphate dehydrogenase family.

The protein localises to the cytoplasm. The enzyme catalyses sn-glycerol 3-phosphate + NAD(+) = dihydroxyacetone phosphate + NADH + H(+). It catalyses the reaction sn-glycerol 3-phosphate + NADP(+) = dihydroxyacetone phosphate + NADPH + H(+). It functions in the pathway membrane lipid metabolism; glycerophospholipid metabolism. Catalyzes the reduction of the glycolytic intermediate dihydroxyacetone phosphate (DHAP) to sn-glycerol 3-phosphate (G3P), the key precursor for phospholipid synthesis. This Lacticaseibacillus casei (strain BL23) (Lactobacillus casei) protein is Glycerol-3-phosphate dehydrogenase [NAD(P)+].